The primary structure comprises 239 residues: Claudin-14 (239 aa).

Over 1-7 (MASTAVQ) the chain is Cytoplasmic. Residues 8 to 28 (LLGFLLSFLGMVGTLITTILP) traverse the membrane as a helical segment. Topologically, residues 29–81 (HWRRTAHVGTNILTAVSYLKGLWMECVWHSTGIYQCQIYRSLLALPRDLQAAR) are extracellular. A helical membrane pass occupies residues 82–102 (ALMVISCLLSGMACACAVVGM). The Cytoplasmic portion of the chain corresponds to 103 to 115 (KCTRCAKGTPAKT). The chain crosses the membrane as a helical span at residues 116 to 136 (TFAVLGGALFLLAGLLCMVAV). Residues 137 to 162 (SWTTNDVVQNFYNPLLPSGMKFEIGQ) are Extracellular-facing. A helical membrane pass occupies residues 163–183 (ALYLGFISSSLSLIGGTLLCL). Over 184 to 239 (SCQDEAPYRPYPPQSRAGATTTATAPAYRPPAAYKDNRAPSVTSAAHSGYRLNDYV) the chain is Cytoplasmic.

The protein belongs to the claudin family. As to expression, expressed in all sensory epithelia of the inner ear vestibular organs, as well as in liver and kidney.

The protein localises to the cell junction. It localises to the tight junction. It is found in the cell membrane. Its function is as follows. Plays a major role in tight junction-specific obliteration of the intercellular space, through calcium-independent cell-adhesion activity. The chain is Claudin-14 (Cldn14) from Mus musculus (Mouse).